Reading from the N-terminus, the 897-residue chain is N-terminal acetyltransferase A complex auxiliary subunit NAA15 (897 aa).

TPR repeat units follow at residues 77–110 (HVCW…DPDN), 111–144 (LEIL…KPNH), 189–222 (TEMI…IVDK), 223–256 (LSYK…NPDN), 298–331 (SSAV…KGVP), 380–413 (LWTL…TPTV), and 488–523 (QCMW…YADI). Disordered stretches follow at residues 578-640 (KSTA…DPHG) and 863-897 (SRKS…SVAT). The segment covering 602–617 (KAEARAKKEAESKSEE) has biased composition (basic and acidic residues). Residues 863-872 (SRKSNENGDT) are compositionally biased toward polar residues.

Part of the NatA complex. Associates with ribosomes. Interacts with NAA10. In terms of tissue distribution, expressed in leaves, roots, shoots and flowers.

Auxiliary subunit of the NatA N-alpha-acetyltransferase complex. Required for male gametocyte development, embryogenesis, suspensor development and the formation of the quiescent center (QC) in the root meristem. Involved in plant immunity through the regulation of SNC1 stability. Required for embryo development. This Arabidopsis thaliana (Mouse-ear cress) protein is N-terminal acetyltransferase A complex auxiliary subunit NAA15.